Here is a 358-residue protein sequence, read N- to C-terminus: Peptide chain release factor 1 (358 aa).

Gln-234 carries the post-translational modification N5-methylglutamine.

This sequence belongs to the prokaryotic/mitochondrial release factor family. Methylated by PrmC. Methylation increases the termination efficiency of RF1.

It is found in the cytoplasm. Peptide chain release factor 1 directs the termination of translation in response to the peptide chain termination codons UAG and UAA. The polypeptide is Peptide chain release factor 1 (Akkermansia muciniphila (strain ATCC BAA-835 / DSM 22959 / JCM 33894 / BCRC 81048 / CCUG 64013 / CIP 107961 / Muc)).